Consider the following 755-residue polypeptide: Dolichyl-phosphate-mannose--protein mannosyltransferase 4 (755 aa).

The interval 1–23 (MSQTLKKRGGNSSGRKSPTTSNI) is disordered. N-linked (GlcNAc...) asparagine glycosylation occurs at Asn11. Polar residues predominate over residues 13–23 (SGRKSPTTSNI). Transmembrane regions (helical) follow at residues 92–112 (FFDLHPPFAKLLIAFVGWLIG), 147–167 (IVPIMFLTMKTLGFSVAACLF), 185–205 (ILLDATLILSVALTIFSYSKF), 212–232 (SFSSKWWTWLLATGVSLSCVI), 237–257 (VGVFTYLTIGIAVIHELWILL), and 278–298 (ALIIVPFCIYLYWFYLHFAIL). MIR domains are found at residues 325 to 389 (SKPV…IVPT), 396 to 454 (GTKV…LRLH), and 466 to 523 (KKEI…FDLI). Asn445 is a glycosylation site (N-linked (GlcNAc...) asparagine). Helical transmembrane passes span 595 to 615 (IFFIGNIIGFWLEVCFLSIYI), 640 to 660 (LYNTLGFLFVGWAAHYLPFFL), and 670 to 690 (YLPAHLVAALFSGGLVEFICS). Asn691 carries an N-linked (GlcNAc...) asparagine glycan. Residues 706 to 726 (YKIIAVVAACSTAIIWFFFYF) form a helical membrane-spanning segment.

Belongs to the glycosyltransferase 39 family. Forms a functional homodimer.

The protein localises to the endoplasmic reticulum membrane. It carries out the reaction a di-trans,poly-cis-dolichyl beta-D-mannosyl phosphate + L-seryl-[protein] = 3-O-(alpha-D-mannosyl)-L-seryl-[protein] + a di-trans,poly-cis-dolichyl phosphate + H(+). It catalyses the reaction a di-trans,poly-cis-dolichyl beta-D-mannosyl phosphate + L-threonyl-[protein] = 3-O-(alpha-D-mannosyl)-L-threonyl-[protein] + a di-trans,poly-cis-dolichyl phosphate + H(+). Its pathway is protein modification; protein glycosylation. In terms of biological role, protein mannosyltransferase (PMT) involved in hyphal growth and drug sensitivity. Transfers mannose from Dol-P-mannose to Ser or Thr residues on proteins. PMT1, PMT2 and PMT4 account for most of the protein-O-glycosylation activity, while PMT5 and PMT6 may specifically modulate a much narrower spectrum of target proteins. Accounts for the O-glycosylation of AXL2, responsible for bud site selection, as well as of the SEC20 t-SNARE component. O-glycosylation of SEC20 is essential for its stability. Required for biofilm formation. The sequence is that of Dolichyl-phosphate-mannose--protein mannosyltransferase 4 from Candida albicans (strain SC5314 / ATCC MYA-2876) (Yeast).